The following is a 505-amino-acid chain: 4-trimethylaminobutyraldehyde dehydrogenase (505 aa).

Residues lysine 191 and 243–247 each bind NAD(+); that span reads GSVPT. Catalysis depends on glutamate 265, which acts as the Proton acceptor. Catalysis depends on cysteine 299, which acts as the Nucleophile. Glutamate 402 is an NAD(+) binding site.

The protein belongs to the aldehyde dehydrogenase family. In terms of assembly, homotetramer. Constitutively expressed in all organs tested: brain, eye, gill, GI, heart, liver, kidney, muscle, skin, testis and ovary.

It is found in the cytoplasm. The protein resides in the cytosol. The catalysed reaction is 4-(trimethylamino)butanal + NAD(+) + H2O = 4-(trimethylamino)butanoate + NADH + 2 H(+). It catalyses the reaction an aldehyde + NAD(+) + H2O = a carboxylate + NADH + 2 H(+). Its pathway is amine and polyamine biosynthesis; carnitine biosynthesis. Its function is as follows. Converts gamma-trimethylaminobutyraldehyde into gamma-butyrobetaine with high efficiency (in vitro). Can catalyze the irreversible oxidation of a broad range of aldehydes to the corresponding acids in an NAD-dependent reaction, but with low efficiency. The chain is 4-trimethylaminobutyraldehyde dehydrogenase (aldh9A1) from Oryzias latipes (Japanese rice fish).